The primary structure comprises 617 residues: Dihydroxy-acid dehydratase (617 aa).

Aspartate 81 lines the Mg(2+) pocket. Residue cysteine 122 coordinates [2Fe-2S] cluster. Positions 123 and 124 each coordinate Mg(2+). Lysine 124 carries the N6-carboxylysine modification. [2Fe-2S] cluster is bound at residue cysteine 197. Residue glutamate 494 participates in Mg(2+) binding. Residue serine 520 is the Proton acceptor of the active site.

It belongs to the IlvD/Edd family. As to quaternary structure, homodimer. [2Fe-2S] cluster serves as cofactor. Mg(2+) is required as a cofactor.

The catalysed reaction is (2R)-2,3-dihydroxy-3-methylbutanoate = 3-methyl-2-oxobutanoate + H2O. It carries out the reaction (2R,3R)-2,3-dihydroxy-3-methylpentanoate = (S)-3-methyl-2-oxopentanoate + H2O. Its pathway is amino-acid biosynthesis; L-isoleucine biosynthesis; L-isoleucine from 2-oxobutanoate: step 3/4. It functions in the pathway amino-acid biosynthesis; L-valine biosynthesis; L-valine from pyruvate: step 3/4. Its function is as follows. Functions in the biosynthesis of branched-chain amino acids. Catalyzes the dehydration of (2R,3R)-2,3-dihydroxy-3-methylpentanoate (2,3-dihydroxy-3-methylvalerate) into 2-oxo-3-methylpentanoate (2-oxo-3-methylvalerate) and of (2R)-2,3-dihydroxy-3-methylbutanoate (2,3-dihydroxyisovalerate) into 2-oxo-3-methylbutanoate (2-oxoisovalerate), the penultimate precursor to L-isoleucine and L-valine, respectively. In Frankia casuarinae (strain DSM 45818 / CECT 9043 / HFP020203 / CcI3), this protein is Dihydroxy-acid dehydratase.